Reading from the N-terminus, the 481-residue chain is MTNQDPDDGAYPSSQSDDDGIEALAINRQSRPLLAYEDQAAGQSDAFTDRDIPASTAPLTGRRRTPLSWTEVIWVSLTLLLIAVLGYSSQLYVMLPYYEKTPSFSPQALAAVLVPFNLGLLAIYYNYWLCVTTDAGSVPAGWQPEWSALEPVASLAELEHLHLVAEEEPSLELKQAIYRPRYCKTCSAFKPPRSHHCKTCQRCVLRMDHHCPWLANCVGHFNHAHFIRFLFYVDVTCLYHLIMISCRVLDSFNSYTYWREPCARELVWLVVNYALCIPVILLVGIFSLYHFYCLAVNQTTIESWEKDRTATMIRRGRVRKVKYPYDLGLWRNVRQVLGASPLVWCLPGAGARMAGDGLKYPVANGLDSGSQYRWPPKDPSRPHPSRRTWASSSSPFTYPERSNPILDPTLSTRFPHNSSPSSSDSHSSLHLPHPPSLLDPLPHHFDPPHDPDTQPVNCPKRVSVRRGSEGYEVRPHTPWSV.

The tract at residues 1–22 (MTNQDPDDGAYPSSQSDDDGIE) is disordered. Topologically, residues 1-66 (MTNQDPDDGA…APLTGRRRTP (66 aa)) are cytoplasmic. A helical transmembrane segment spans residues 67 to 87 (LSWTEVIWVSLTLLLIAVLGY). Over 88 to 108 (SSQLYVMLPYYEKTPSFSPQA) the chain is Lumenal. The helical transmembrane segment at 109–129 (LAAVLVPFNLGLLAIYYNYWL) threads the bilayer. Over 130 to 223 (CVTTDAGSVP…LANCVGHFNH (94 aa)) the chain is Cytoplasmic. The region spanning 181 to 231 (RYCKTCSAFKPPRSHHCKTCQRCVLRMDHHCPWLANCVGHFNHAHFIRFLF) is the DHHC domain. Cysteine 211 (S-palmitoyl cysteine intermediate) is an active-site residue. Residues 224 to 244 (AHFIRFLFYVDVTCLYHLIMI) form a helical membrane-spanning segment. The Lumenal segment spans residues 245–265 (SCRVLDSFNSYTYWREPCARE). The helical transmembrane segment at 266 to 286 (LVWLVVNYALCIPVILLVGIF) threads the bilayer. Residues 287–481 (SLYHFYCLAV…EVRPHTPWSV (195 aa)) lie on the Cytoplasmic side of the membrane. A disordered region spans residues 370 to 481 (SQYRWPPKDP…EVRPHTPWSV (112 aa)). Residues 418–431 (SSPSSSDSHSSLHL) are compositionally biased toward low complexity. Composition is skewed to basic and acidic residues over residues 441 to 452 (LPHHFDPPHDPD) and 466 to 475 (RGSEGYEVRP).

It belongs to the DHHC palmitoyltransferase family. PFA4 subfamily.

It localises to the endoplasmic reticulum membrane. It catalyses the reaction L-cysteinyl-[protein] + hexadecanoyl-CoA = S-hexadecanoyl-L-cysteinyl-[protein] + CoA. Functionally, mediates the reversible addition of palmitate to target proteins, thereby regulating their membrane association and biological function. This Mycosarcoma maydis (Corn smut fungus) protein is Palmitoyltransferase PFA4.